The following is a 159-amino-acid chain: Eukaryotic translation initiation factor 5A-2 (159 aa).

Residues 1 to 10 (MSDDEHHFEA) show a composition bias toward basic and acidic residues. Positions 1–25 (MSDDEHHFEASESGASKTYPQSAGN) are disordered. S2 carries the post-translational modification Phosphoserine. The segment covering 13–24 (SGASKTYPQSAG) has biased composition (polar residues). K51 carries the hypusine modification.

Belongs to the eIF-5A family. In terms of assembly, homodimer. Interacts with AHK4 and AHP1. Cytokinin regulates the formation of the AHP1-AHK4-ELF5A-2 complex. In terms of processing, lys-51 undergoes hypusination, a unique post-translational modification that consists in the addition of a butylamino group from spermidine to lysine side chain, leading to the formation of the unusual amino acid hypusine. eIF-5As are the only known proteins to undergo this modification, which is essential for their function. Ubiquitous. In roots, expressed mostly inside the stele of the mature zone.

Its subcellular location is the cytoplasm. The protein localises to the nucleus. Functionally, translation factor that promotes translation elongation and termination, particularly upon ribosome stalling at specific amino acid sequence contexts. Binds between the exit (E) and peptidyl (P) site of the ribosome and promotes rescue of stalled ribosome: specifically required for efficient translation of polyproline-containing peptides as well as other motifs that stall the ribosome. Acts as a ribosome quality control (RQC) cofactor by joining the RQC complex to facilitate peptidyl transfer during CAT tailing step. Regulates cytokinin-mediated root protoxylem specification and represses secifically the expression of AHP6. Regulates the induction of programmed cell death caused by infection with virulent pathogen. This is Eukaryotic translation initiation factor 5A-2 (ELF5A-2) from Arabidopsis thaliana (Mouse-ear cress).